The primary structure comprises 216 residues: Ribosome maturation factor RimP (216 aa).

This sequence belongs to the RimP family.

Its subcellular location is the cytoplasm. Its function is as follows. Required for maturation of 30S ribosomal subunits. In Bartonella henselae (strain ATCC 49882 / DSM 28221 / CCUG 30454 / Houston 1) (Rochalimaea henselae), this protein is Ribosome maturation factor RimP.